The chain runs to 562 residues: Adenylate kinase isoenzyme 5 (562 aa).

Adenylate kinase regions lie at residues 133–316 and 377–559; these read KIIL…MAVD and KIIF…TAID. 142–147 contacts ATP; that stretch reads GSGKGT. The segment at 162-193 is NMP 1; that stretch reads SVGELLRKKIHSTSSNRKWSLIAKIITTGELA. AMP contacts are provided by residues Arg168, 191–193, 219–222, and Gln226; these read ELA and GFPR. Positions 256-266 are LID 1; that stretch reads KRAEQQGRPDD. Arg257 is an ATP binding site. 2 residues coordinate AMP: Arg263 and Arg274. 386 to 391 contributes to the ATP binding site; that stretch reads GSGKGT. Residues 406 to 435 form an NMP 2 region; it reads STDELLQNELSSESGRSKLIRDIMERGELV. Residues Thr407, 433 to 435, 462 to 465, and Gln469 contribute to the AMP site; these read ELV and GYPR. Positions 499 to 509 are LID 2; that stretch reads QRSRNSPQADD. Residue Arg500 coordinates ATP. Arg517 contributes to the AMP binding site. Gly545 serves as a coordination point for ATP.

It belongs to the adenylate kinase family. In terms of assembly, monomer.

Its subcellular location is the cytoplasm. It catalyses the reaction AMP + ATP = 2 ADP. The catalysed reaction is a 2'-deoxyribonucleoside 5'-diphosphate + ATP = a 2'-deoxyribonucleoside 5'-triphosphate + ADP. The enzyme catalyses a ribonucleoside 5'-diphosphate + ATP = a ribonucleoside 5'-triphosphate + ADP. In terms of biological role, nucleoside monophosphate (NMP) kinase that catalyzes the reversible transfer of the terminal phosphate group between nucleoside triphosphates and monophosphates. Active on AMP and dAMP with ATP as a donor. When GTP is used as phosphate donor, the enzyme phosphorylates AMP, CMP, and to a small extent dCMP. Also displays broad nucleoside diphosphate kinase activity. In Bos taurus (Bovine), this protein is Adenylate kinase isoenzyme 5 (Ak5).